The sequence spans 92 residues: Small ribosomal subunit protein uS19c (92 aa).

It belongs to the universal ribosomal protein uS19 family.

The protein localises to the plastid. It is found in the chloroplast. Protein S19 forms a complex with S13 that binds strongly to the 16S ribosomal RNA. The protein is Small ribosomal subunit protein uS19c of Acorus calamus (Sweet flag).